A 120-amino-acid chain; its full sequence is Non-specific lipid-transfer protein 1 (120 aa).

The first 25 residues, 1 to 25, serve as a signal peptide directing secretion; sequence MARSMKLACVALVICMVVIAPMAEA. 4 disulfide bridges follow: C29–C78, C39–C55, C56–C101, and C76–C115. Residue F120 is a propeptide.

This sequence belongs to the plant LTP family. In terms of tissue distribution, expressed in roots, stem, leaves and tendrils of the mature plant.

Its function is as follows. Plant non-specific lipid-transfer proteins transfer phospholipids as well as galactolipids across membranes. May play a role in wax or cutin deposition in the cell walls of expanding epidermal cells and certain secretory tissues. Binds saturated and unsaturated lipids, jasmonic acid and lysolipids. Has antifungal activity against A.niger VKM F-2259 (IC(50)=40 uM), F.oxysporum TCXA-4 (IC(50)=20-40), F.solani VKM F-142 (IC(50)=20-40 uM) and N.crassa VKM F-184 (IC(50)=40 uM). Has weak antibacterial activity against A.tumefaciens A281, C.michiganensis VKM Ac-1144 and P.syringae VKM B-1546. The protein is Non-specific lipid-transfer protein 1 of Pisum sativum (Garden pea).